We begin with the raw amino-acid sequence, 286 residues long: Alpha-ketoglutarate-dependent dioxygenase alkB homolog 3 (286 aa).

The tract at residues 21-45 is disordered; the sequence is QAIAQPATTAKSHLHQKPGQTWKNK. Polar residues predominate over residues 22–31; sequence AIAQPATTAK. Residues W115 and 141–143 each bind substrate; that span reads YTY. Residues 172 to 278 form the Fe2OG dioxygenase domain; sequence TFNSLLCNLY…RVNLTFRTVY (107 aa). L177 is subject to (4R)-5-hydroxyleucine; alternate. L177 carries the (4R)-5-oxoleucine; alternate modification. 179–181 contributes to the 2-oxoglutarate binding site; that stretch reads NLY. Residues H191 and D193 each coordinate Fe cation. D194 is a substrate binding site. H257 contributes to the Fe cation binding site. Residues 269 to 275 and R275 each bind 2-oxoglutarate; that span reads RVNLTFR.

Belongs to the alkB family. In terms of assembly, interacts with the ASCC complex composed of ASCC1, ASCC2 and ASCC3. Interacts directly with ASCC3, and is thereby recruited to the ASCC complex. Interacts with OTUD4; the interaction is direct. Interacts with USP7 and USP9X. Fe(2+) serves as cofactor. Ubiquitinated; undergoes 'Lys-48'-linked polyubiquitination. OTUD4 promotes USP7 and USP9X-dependent deubiquitination of 'Lys-48'-polyubiquitinated ALKBH3 promoting the repair of alkylated DNA lesions. Ubiquitous. Detected in heart, pancreas, skeletal muscle, thymus, testis, ovary, spleen, prostate, small intestine, peripheral blood leukocytes, urinary bladder and colon.

The protein resides in the nucleus. It localises to the cytoplasm. It catalyses the reaction an N(1)-methyladenosine in mRNA + 2-oxoglutarate + O2 = an adenosine in mRNA + formaldehyde + succinate + CO2. The catalysed reaction is a methylated nucleobase within DNA + 2-oxoglutarate + O2 = a nucleobase within DNA + formaldehyde + succinate + CO2. The enzyme catalyses an N(1)-methyl-2'-deoxyadenosine in single-stranded DNA + 2-oxoglutarate + O2 = a 2'-deoxyadenosine in single-stranded DNA + formaldehyde + succinate + CO2 + H(+). It carries out the reaction an N(3)-methyl-2'-deoxycytidine in single-stranded DNA + 2-oxoglutarate + O2 = a 2'-deoxycytidine in single-stranded DNA + formaldehyde + succinate + CO2 + H(+). It catalyses the reaction a 3,N(4)-etheno-2'-deoxycytidine in single-stranded DNA + 2-oxoglutarate + O2 + H2O = a 2'-deoxycytidine in single-stranded DNA + glyoxal + succinate + CO2. Activated by ascorbate. Functionally, dioxygenase that mediates demethylation of DNA and RNA containing 1-methyladenosine (m1A). Repairs alkylated DNA containing 1-methyladenosine (m1A) and 3-methylcytosine (m3C) by oxidative demethylation. Has a strong preference for single-stranded DNA. Able to process alkylated m3C within double-stranded regions via its interaction with ASCC3, which promotes DNA unwinding to generate single-stranded substrate needed for ALKBH3. Can repair exocyclic 3,N4-ethenocytosine adducs in single-stranded DNA. Also acts on RNA. Demethylates N(1)-methyladenosine (m1A) RNA, an epigenetic internal modification of messenger RNAs (mRNAs) highly enriched within 5'-untranslated regions (UTRs) and in the vicinity of start codons. Requires molecular oxygen, alpha-ketoglutarate and iron. This is Alpha-ketoglutarate-dependent dioxygenase alkB homolog 3 from Homo sapiens (Human).